Here is a 540-residue protein sequence, read N- to C-terminus: CTP synthase (540 aa).

The amidoligase domain stretch occupies residues 1–267 (MKIMKFIFIT…GKLVTKKLNL (267 aa)). Residue Ser-15 coordinates CTP. Ser-15 is a UTP binding site. 16-21 (SLGKGI) serves as a coordination point for ATP. Tyr-56 is an L-glutamine binding site. Asp-73 serves as a coordination point for ATP. 2 residues coordinate Mg(2+): Asp-73 and Glu-141. CTP is bound by residues 148–150 (DIE), 188–193 (KTKPTQ), and Lys-224. UTP-binding positions include 188–193 (KTKPTQ) and Lys-224. Residue 240–242 (RDA) participates in ATP binding. A Glutamine amidotransferase type-1 domain is found at 292–540 (TIGIVGKYVE…VRASLGEKIK (249 aa)). Gly-360 is a binding site for L-glutamine. Cys-387 functions as the Nucleophile; for glutamine hydrolysis in the catalytic mechanism. Residues 388 to 391 (MGMQ), Glu-411, and Arg-468 each bind L-glutamine. Catalysis depends on residues His-513 and Glu-515.

This sequence belongs to the CTP synthase family. In terms of assembly, homotetramer.

It carries out the reaction UTP + L-glutamine + ATP + H2O = CTP + L-glutamate + ADP + phosphate + 2 H(+). The enzyme catalyses L-glutamine + H2O = L-glutamate + NH4(+). The catalysed reaction is UTP + NH4(+) + ATP = CTP + ADP + phosphate + 2 H(+). It functions in the pathway pyrimidine metabolism; CTP biosynthesis via de novo pathway; CTP from UDP: step 2/2. Allosterically activated by GTP, when glutamine is the substrate; GTP has no effect on the reaction when ammonia is the substrate. The allosteric effector GTP functions by stabilizing the protein conformation that binds the tetrahedral intermediate(s) formed during glutamine hydrolysis. Inhibited by the product CTP, via allosteric rather than competitive inhibition. Catalyzes the ATP-dependent amination of UTP to CTP with either L-glutamine or ammonia as the source of nitrogen. Regulates intracellular CTP levels through interactions with the four ribonucleotide triphosphates. This chain is CTP synthase, found in Methanocaldococcus jannaschii (strain ATCC 43067 / DSM 2661 / JAL-1 / JCM 10045 / NBRC 100440) (Methanococcus jannaschii).